The following is a 527-amino-acid chain: Glucose transporter 1B/1C/1D/1F/2B (527 aa).

The disordered stretch occupies residues Met1–Ala22. Topologically, residues Met1–Gln43 are cytoplasmic. Residues Val44–Tyr64 traverse the membrane as a helical segment. The Extracellular portion of the chain corresponds to Leu65–Ser118. Residues Val119–Ala139 traverse the membrane as a helical segment. The Cytoplasmic portion of the chain corresponds to Gly140–Ser151. The helical transmembrane segment at Phe152 to Tyr172 threads the bilayer. Topologically, residues Asn173–Tyr175 are extracellular. Residues Tyr176 to Phe196 form a helical membrane-spanning segment. Over Pro197–Gly213 the chain is Cytoplasmic. Residues Val214–Leu234 traverse the membrane as a helical segment. At Asp235–Arg249 the chain is on the extracellular side. A helical transmembrane segment spans residues Leu250–Phe270. Residues Leu271 to Gln299 lie on the Cytoplasmic side of the membrane. Residues Met300–Asn320 form a helical membrane-spanning segment. At Ala321–Ser338 the chain is on the extracellular side. Residues Leu339–Ala359 form a helical membrane-spanning segment. Over Ser360–Ser372 the chain is Cytoplasmic. The helical transmembrane segment at Phe373–Gly393 threads the bilayer. At Lys394–Thr403 the chain is on the extracellular side. Residues Gly404 to Ala424 traverse the membrane as a helical segment. At Gln425–Gly436 the chain is on the cytoplasmic side. The chain crosses the membrane as a helical span at residues Gly437 to Ile457. The Extracellular portion of the chain corresponds to Thr458–Ala475. Residues Val476 to Leu496 traverse the membrane as a helical segment. The Cytoplasmic segment spans residues Tyr497–Asn527. The segment covering Glu506–Glu515 has biased composition (basic and acidic residues). A disordered region spans residues Glu506–Asn527.

This sequence belongs to the major facilitator superfamily. Sugar transporter (TC 2.A.1.1) family.

It is found in the membrane. Its function is as follows. Facilitative glucose transporter. The chain is Glucose transporter 1B/1C/1D/1F/2B (THT1B) from Trypanosoma brucei brucei.